A 1154-amino-acid chain; its full sequence is DNA-directed RNA polymerase subunit beta (1154 aa).

Over residues Glu1108–Gly1123 the composition is skewed to basic and acidic residues. Positions Glu1108 to Glu1136 are disordered. The segment covering Ser1127–Glu1136 has biased composition (acidic residues).

This sequence belongs to the RNA polymerase beta chain family. The RNAP catalytic core consists of 2 alpha, 1 beta, 1 beta' and 1 omega subunit. When a sigma factor is associated with the core the holoenzyme is formed, which can initiate transcription.

It catalyses the reaction RNA(n) + a ribonucleoside 5'-triphosphate = RNA(n+1) + diphosphate. Its function is as follows. DNA-dependent RNA polymerase catalyzes the transcription of DNA into RNA using the four ribonucleoside triphosphates as substrates. This Heliobacterium modesticaldum (strain ATCC 51547 / Ice1) protein is DNA-directed RNA polymerase subunit beta.